We begin with the raw amino-acid sequence, 291 residues long: 3-hydroxy-5-phosphonooxypentane-2,4-dione thiolase (291 aa).

K203 functions as the Schiff-base intermediate with substrate in the catalytic mechanism.

This sequence belongs to the DeoC/FbaB aldolase family. Homodecamer.

The protein resides in the cytoplasm. It catalyses the reaction dihydroxyacetone phosphate + acetyl-CoA = 3-hydroxy-2,4-dioxopentyl phosphate + CoA. Its function is as follows. Involved in the degradation of phospho-AI-2, thereby terminating induction of the lsr operon and closing the AI-2 signaling cycle. Catalyzes the transfer of an acetyl moiety from 3-hydroxy-5-phosphonooxypentane-2,4-dione to CoA to form glycerone phosphate and acetyl-CoA. The sequence is that of 3-hydroxy-5-phosphonooxypentane-2,4-dione thiolase from Yersinia pestis bv. Antiqua (strain Antiqua).